Consider the following 341-residue polypeptide: Farnesyl pyrophosphate synthase 2 (341 aa).

Residues Lys46, Arg49, and Gln85 each contribute to the isopentenyl diphosphate site. The Mg(2+) site is built by Asp92 and Asp96. Arg101 is a dimethylallyl diphosphate binding site. Residue Arg102 participates in isopentenyl diphosphate binding. Dimethylallyl diphosphate-binding residues include Lys189, Thr190, Gln228, Lys245, and Lys254.

It belongs to the FPP/GGPP synthase family. It depends on Mg(2+) as a cofactor. Mainly expressed in trichomes, roots and flowers, and, to a lower extent, in leaves and stems.

Its subcellular location is the cytoplasm. The protein resides in the nucleus. It catalyses the reaction isopentenyl diphosphate + dimethylallyl diphosphate = (2E)-geranyl diphosphate + diphosphate. The enzyme catalyses isopentenyl diphosphate + (2E)-geranyl diphosphate = (2E,6E)-farnesyl diphosphate + diphosphate. Its pathway is isoprenoid biosynthesis; farnesyl diphosphate biosynthesis; farnesyl diphosphate from geranyl diphosphate and isopentenyl diphosphate: step 1/1. The protein operates within sesquiterpene biosynthesis. It functions in the pathway isoprenoid biosynthesis; geranyl diphosphate biosynthesis; geranyl diphosphate from dimethylallyl diphosphate and isopentenyl diphosphate: step 1/1. Its function is as follows. Catalyzes the sequential condensation of isopentenyl pyrophosphate with the allylic pyrophosphates, dimethylallyl pyrophosphate, and then with the resultant geranylpyrophosphate to the ultimate product farnesyl pyrophosphate. This Cannabis sativa (Hemp) protein is Farnesyl pyrophosphate synthase 2.